Here is a 949-residue protein sequence, read N- to C-terminus: Collagen alpha-2(I) chain (949 aa).

A disordered region spans residues 1-949; it reads SGGFDFSFLP…FGYEGDFYRA (949 aa). Proline 10, proline 13, proline 34, and proline 40 each carry 4-hydroxyproline. A compositionally biased stretch (low complexity) spans 27-66; the sequence is LMGPRGPPGASGAPGPQGFQGPAGEPGEPGQTGPAGARGP. Lysine 95 is modified (5-hydroxylysine; alternate). The O-linked (Gal...) hydroxylysine; alternate glycan is linked to lysine 95. Low complexity-rich tracts occupy residues 147–162 and 208–229; these read SVGP…SAGP and PGAN…AGAP. Residues 263–272 show a composition bias toward gly residues; the sequence is GESGGKGEPG. Over residues 273–283 the composition is skewed to low complexity; that stretch reads SAGPQGPPGSS. Over residues 292–313 the composition is skewed to gly residues; sequence NGEGSTGPTGPPGLRGGPGSRG. A 4-hydroxyproline mark is found at proline 348 and proline 351. Residues 377-396 are compositionally biased toward low complexity; it reads LPGIDGRPGPIGPAGARGEA. Over residues 435–444 the composition is skewed to gly residues; that stretch reads GVQGGKGEQG. Composition is skewed to low complexity over residues 490–507 and 519–529; these read PGES…SRGP and EPGVVGAPGTA. Residues 530–539 show a composition bias toward gly residues; it reads GPAGSGGLPG. Composition is skewed to low complexity over residues 562–606 and 613–633; these read VGTT…PRGS and VGPA…QPGA. The segment covering 634–643 has biased composition (basic and acidic residues); it reads KGERGTKGPK. Over residues 651–661 the composition is skewed to low complexity; that stretch reads PTGPVGSAGPA. Over residues 671–680 the composition is skewed to gly residues; sequence GSRGDGGPPG. Residues 682–691 show a composition bias toward low complexity; the sequence is TGFPGAAGRT. Residues 722-736 are compositionally biased toward gly residues; that stretch reads GPVGRGETGAGGPPG. Composition is skewed to low complexity over residues 737–771, 779–792, and 810–825; these read FTGE…LGLP, LPGV…PGPL, and EPGP…ALGP. Residues 835 to 846 show a composition bias toward basic and acidic residues; it reads RGDKGEPGEKGP. Positions 921 to 931 are enriched in pro residues; that stretch reads PAGPPGPPGPP.

Belongs to the fibrillar collagen family. In terms of assembly, trimers of one alpha 2(I) and two alpha 1(I) chains. Interacts (via C-terminus) with TMEM131 (via PapD-L domain); the interaction is direct and is involved in assembly and TRAPPIII ER-to-Golgi transport complex-dependent secretion of collagen. Prolines at the third position of the tripeptide repeating unit (G-X-Y) are hydroxylated in some or all of the chains. In terms of tissue distribution, expressed in bones.

It is found in the secreted. Its subcellular location is the extracellular space. The protein localises to the extracellular matrix. Type I collagen is a member of group I collagen (fibrillar forming collagen). The chain is Collagen alpha-2(I) chain from Acratocnus ye (Hispaniolan ground sloth).